The primary structure comprises 185 residues: MSRLLVGLKLAQSHYLSQLHKYPVATKAVTSGFLYLISDSLVQGIELSRDKDKKYDFKRSMRMAVFGFAVTGPLFHYWFKYLDKHFPKKSYRHAFIKLTIDQVVCSPVFNFLFFSGMGILEGKSKDDIVEKLKKDWLTTYVSDCVVWPFINFVNFAYISSIHRVTFMNVCNIGWGAFLAKMNSSH.

A run of 3 helical transmembrane segments spans residues 63–83 (MAVF…KYLD), 100–120 (IDQV…MGIL), and 141–161 (VSDC…ISSI).

Belongs to the peroxisomal membrane protein PXMP2/4 family.

Its subcellular location is the membrane. This is PXMP2/4 family protein 4 from Dictyostelium discoideum (Social amoeba).